The chain runs to 1125 residues: Exportin-6 (1125 aa).

Alanine 2 is modified (N-acetylalanine). Residues 31-97 (IEELLNNFAQ…RSCLPKLLLA (67 aa)) form the Importin N-terminal domain. At serine 199 the chain carries Phosphoserine. A phosphothreonine mark is found at threonine 201 and threonine 204. Phosphoserine occurs at positions 208 and 224.

It belongs to the exportin family. Found in a complex with XPO6, Ran, ACTB and PFN1. Interacts with ACTB. Interacts with ACTB in a RanGTP-dependent manner.

The protein resides in the nucleus. It is found in the cytoplasm. Functionally, mediates the nuclear export of actin and profilin-actin complexes in somatic cells. The polypeptide is Exportin-6 (Xpo6) (Mus musculus (Mouse)).